A 186-amino-acid polypeptide reads, in one-letter code: uncharacterized protein (186 aa).

The 173-residue stretch at L12–R184 folds into the N-acetyltransferase domain.

This sequence belongs to the acetyltransferase family.

It is found in the cytoplasm. Its subcellular location is the nucleus. This is an uncharacterized protein from Schizosaccharomyces pombe (strain 972 / ATCC 24843) (Fission yeast).